We begin with the raw amino-acid sequence, 68 residues long: DNA gyrase inhibitor YacG (68 aa).

4 residues coordinate Zn(2+): cysteine 10, cysteine 13, cysteine 29, and cysteine 33. The disordered stretch occupies residues glutamate 45–histidine 68. A compositionally biased stretch (acidic residues) spans glutamate 53–histidine 68.

This sequence belongs to the DNA gyrase inhibitor YacG family. In terms of assembly, interacts with GyrB. Zn(2+) serves as cofactor.

Its function is as follows. Inhibits all the catalytic activities of DNA gyrase by preventing its interaction with DNA. Acts by binding directly to the C-terminal domain of GyrB, which probably disrupts DNA binding by the gyrase. The sequence is that of DNA gyrase inhibitor YacG from Yersinia pseudotuberculosis serotype O:1b (strain IP 31758).